The chain runs to 1381 residues: Hepatocyte growth factor receptor (1381 aa).

A signal peptide spans Met-1–Gly-24. Over Glu-25 to Thr-932 the chain is Extracellular. Residues Lys-27–Leu-515 form the Sema domain. A glycan (N-linked (GlcNAc...) asparagine) is linked at Asn-45. Disulfide bonds link Cys-95–Cys-101, Cys-98–Cys-160, Cys-133–Cys-141, and Cys-173–Cys-176. Asn-106 carries N-linked (GlcNAc...) asparagine glycosylation. N-linked (GlcNAc...) asparagine glycans are attached at residues Asn-203 and Asn-359. 2 disulfides stabilise this stretch: Cys-299/Cys-364 and Cys-386/Cys-398. 2 N-linked (GlcNAc...) asparagine glycosylation sites follow: Asn-400 and Asn-406. Intrachain disulfides connect Cys-520–Cys-538, Cys-526–Cys-561, Cys-529–Cys-545, and Cys-541–Cys-551. IPT/TIG domains are found at residues Pro-563 to Val-655, Pro-657 to Arg-739, and Pro-742 to Val-836. Thr-582 is a glycosylation site (O-linked (Man) threonine). 2 N-linked (GlcNAc...) asparagine glycosylation sites follow: Asn-607 and Asn-635. O-linked (Man) threonine glycosylation is found at Thr-676 and Thr-761. 3 N-linked (GlcNAc...) asparagine glycosylation sites follow: Asn-785, Asn-879, and Asn-930. Residues Gly-933–Leu-955 traverse the membrane as a helical segment. Residues Lys-956–Thr-1381 are Cytoplasmic-facing. Ser-966 is modified (phosphoserine). At Thr-977 the chain carries Phosphothreonine. 2 positions are modified to phosphoserine: Ser-990 and Ser-997. Residue Tyr-1003 is modified to Phosphotyrosine. The Protein kinase domain occupies Val-1078 to Ile-1345. ATP contacts are provided by residues Ile-1084–Val-1092 and Lys-1110. Catalysis depends on Asp-1204, which acts as the Proton acceptor. The interaction with RANBP9 stretch occupies residues Leu-1212–Thr-1381. Tyr-1230 is subject to Phosphotyrosine. Residues Tyr-1234 and Tyr-1235 each carry the phosphotyrosine; by autocatalysis modification. Thr-1289 carries the post-translational modification Phosphothreonine. Residues Trp-1320–Val-1359 form an interaction with MUC20 region. Phosphotyrosine; by autocatalysis is present on residues Tyr-1349 and Tyr-1356. Phosphotyrosine is present on Tyr-1365.

It belongs to the protein kinase superfamily. Tyr protein kinase family. In terms of assembly, heterodimer made of an alpha chain (50 kDa) and a beta chain (145 kDa) which are disulfide linked. Binds PLXNB1. Interacts when phosphorylated with downstream effectors including STAT3, PIK3R1, SRC, PCLG1, GRB2 and GAB1. Interacts with SPSB1, SPSB2 and SPSB4. Interacts with INPP5D/SHIP1. When phosphorylated at Tyr-1356, interacts with INPPL1/SHIP2. Interacts with RANBP9 and RANBP10, as well as SPSB1, SPSB2, SPSB3 and SPSB4. SPSB1 binding occurs in the presence and in the absence of HGF, however HGF treatment has a positive effect on this interaction. Interacts with MUC20; prevents interaction with GRB2 and suppresses hepatocyte growth factor-induced cell proliferation. Interacts with GRB10. Interacts with PTPN1 and PTPN2. Interacts with HSP90AA1 and HSP90AB1; the interaction suppresses MET kinase activity. Interacts with tensin TNS3. Interacts (when phosphorylated) with tensin TNS4 (via SH2 domain); the interaction increases MET protein stability by inhibiting MET endocytosis and subsequent lysosomal degradation. Autophosphorylated in response to ligand binding on Tyr-1234 and Tyr-1235 in the kinase domain leading to further phosphorylation of Tyr-1349 and Tyr-1356 in the C-terminal multifunctional docking site. Dephosphorylated by PTPRJ at Tyr-1349 and Tyr-1365. Dephosphorylated by PTPN1 and PTPN2. In terms of processing, ubiquitinated. Ubiquitination by CBL regulates the receptor stability and activity through proteasomal degradation. Post-translationally, O-mannosylation of IPT/TIG domains by TMEM260 is required for protein maturation. O-mannosylated residues are composed of single mannose glycans that are not elongated or modified.

Its subcellular location is the membrane. It carries out the reaction L-tyrosyl-[protein] + ATP = O-phospho-L-tyrosyl-[protein] + ADP + H(+). In its inactive state, the C-terminal tail interacts with the catalytic domain and inhibits the kinase activity. Upon ligand binding, the C-terminal tail is displaced and becomes phosphorylated, thus increasing the kinase activity. Its function is as follows. Receptor tyrosine kinase that transduces signals from the extracellular matrix into the cytoplasm by binding to hepatocyte growth factor/HGF ligand. Regulates many physiological processes including proliferation, scattering, morphogenesis and survival. Ligand binding at the cell surface induces autophosphorylation of MET on its intracellular domain that provides docking sites for downstream signaling molecules. Following activation by ligand, interacts with the PI3-kinase subunit PIK3R1, PLCG1, SRC, GRB2, STAT3 or the adapter GAB1. Recruitment of these downstream effectors by MET leads to the activation of several signaling cascades including the RAS-ERK, PI3 kinase-AKT, or PLCgamma-PKC. The RAS-ERK activation is associated with the morphogenetic effects while PI3K/AKT coordinates prosurvival effects. During embryonic development, MET signaling plays a role in gastrulation, development and migration of muscles and neuronal precursors, angiogenesis and kidney formation. In adults, participates in wound healing as well as organ regeneration and tissue remodeling. Also promotes differentiation and proliferation of hematopoietic cells. The polypeptide is Hepatocyte growth factor receptor (MET) (Sus scrofa (Pig)).